The chain runs to 257 residues: Ribosome-associated protein quality control protein P2 (257 aa).

An N-terminal domain region spans residues 1-74 (MSDIYQHFRK…RAERKRAILF (74 aa)). The segment at 87-166 (LQAFNVRYAD…EKIDLSDLNI (80 aa)) is central region. Residues 181-251 (LRLDAVCASM…GKTKKDKWRV (71 aa)) enclose the S4 RNA-binding domain.

In terms of assembly, in the presence of chloramphenicol (a translation elongation inhibitor), but not erythromycin or lincomycin, associates with 50S ribosomal subunits with or without a tRNA in the P-site. The S4 domain binds in a similar position to RqcP.

The protein localises to the cytoplasm. Functionally, part of the ribosome quality control system (RQC), a ribosome-associated complex that mediates the extraction of incompletely synthesized nascent chains from stalled ribosomes and their subsequent degradation. RqcH recruits Ala-charged tRNA, and with RqcP directs the elongation of stalled nascent chains on 50S ribosomal subunits, leading to non-templated C-terminal alanine extensions (Ala tail). The Ala tail promotes nascent chain degradation. RqcP2 (YlmH) overexpression can compensate for RqcP's role in Ala tailing during RQC, restoring Ala tail addition to peptides in stalled ribosomes. Overexpression complements a double ssrA-rqcP double deletion, but not an ssrA-rqcH double deletion. In terms of biological role, the majority of tagged protein is associated with tRNA-less 50S subunits, suggesting it might also play a role in late stage 50S subunit biogenesis. The sequence is that of Ribosome-associated protein quality control protein P2 from Bacillus subtilis (strain 168).